Reading from the N-terminus, the 442-residue chain is MPKLFGTDGVRGVANEDLTPELCLKIGRAAGEYLKSYGDTVLVGRDTRLSGTMLEAALSAGLASVGLKVERLGIVTTPAVAFLASREDVAGGAMISASHNPVPDNGVKFFDNKGYKLAESHEEQIENYLEKELSRPTGTDIGKVLPENNKLIENYIQELIDKYPLDLSNYKIVLDCAYGATYQIAPRLFKKLGAEIIPLHAENRGEKINVECGSTNPELTSRTVVEEGADLGFSFDGDGDRIIALDEEGNQVNGDKIMAILAKDMKSRGELKNDKLIATVMSNLGLKLALKELGIALEETKVGDRNVLNRMREQDCVLGGEQSGHIINLQDNTTGDGVLTGLKLMKVLIDTGQSLKQLASIMEELPQLLVNVKVSNKDSAINSQKVQEEKSKVEKQLGSKGRVLIRPSGTEPVIRVMVEGENRETLHEVANHLTQVIKKAAE.

S98 (phosphoserine intermediate) is an active-site residue. Mg(2+)-binding residues include S98, D236, D238, and D240. S98 carries the post-translational modification Phosphoserine.

Belongs to the phosphohexose mutase family. The cofactor is Mg(2+). Activated by phosphorylation.

It carries out the reaction alpha-D-glucosamine 1-phosphate = D-glucosamine 6-phosphate. Its function is as follows. Catalyzes the conversion of glucosamine-6-phosphate to glucosamine-1-phosphate. The sequence is that of Phosphoglucosamine mutase from Natranaerobius thermophilus (strain ATCC BAA-1301 / DSM 18059 / JW/NM-WN-LF).